The sequence spans 821 residues: Protein SCAR1 (821 aa).

3 disordered regions span residues 168-189 (KRASRASKPSEIKKKKSIQRGR), 205-289 (TCTS…RGSS), and 577-625 (TSLP…RESK). Over residues 206–225 (CTSLSFSGRTSTSKTASTIE) the composition is skewed to polar residues. Over residues 226–250 (IESKSDLQEHRSFSFDSRSGGEKPK) the composition is skewed to basic and acidic residues. The span at 252-265 (VSSSSRFTPGSRTI) shows a compositional bias: polar residues. Positions 592–612 (SSSYISDNSDNDNRSVSMSEQ) are enriched in low complexity. One can recognise a WH2 domain in the interval 756-774 (EAGDFLHQIRTKQFNLRRV). The disordered stretch occupies residues 802 to 821 (QAVASDDGEGESDTWSDSDT). The segment covering 807-821 (DDGEGESDTWSDSDT) has biased composition (acidic residues).

Belongs to the SCAR/WAVE family. Binds BRK1 and actin. Interacts with SPK1, ABI1 and ABI2. As to expression, expressed in expanding cotyledons, expanding leaves and expanding siliques containing developing embryos. Detected in unopened flower buds and in the expanding tip region of roots. Reduced expression in mature leaves and mature cotyledons.

The protein localises to the cytoplasm. It localises to the cytoskeleton. Its function is as follows. Involved in regulation of actin and microtubule organization. Part of a WAVE complex that activates the Arp2/3 complex. Regulates trichome branch positioning and expansion. The protein is Protein SCAR1 (SCAR1) of Arabidopsis thaliana (Mouse-ear cress).